Here is a 283-residue protein sequence, read N- to C-terminus: NADH-ubiquinone oxidoreductase 30.4 kDa subunit, mitochondrial (283 aa).

The transit peptide at 1–17 (MASKLCRSRALASALRS) directs the protein to the mitochondrion. A disordered region spans residues 258 to 283 (GAGIDRKPESFKLPTPKPETKPEEKK).

It belongs to the complex I 30 kDa subunit family. Complex I is composed of about 40 different subunits. This is a component of the iron-sulfur protein fraction.

Its subcellular location is the mitochondrion inner membrane. The enzyme catalyses a ubiquinone + NADH + 5 H(+)(in) = a ubiquinol + NAD(+) + 4 H(+)(out). In terms of biological role, core subunit of the mitochondrial membrane respiratory chain NADH dehydrogenase (Complex I) that is believed to belong to the minimal assembly required for catalysis. Complex I functions in the transfer of electrons from NADH to the respiratory chain. The immediate electron acceptor for the enzyme is believed to be ubiquinone. The polypeptide is NADH-ubiquinone oxidoreductase 30.4 kDa subunit, mitochondrial (nuo-31) (Neurospora crassa (strain ATCC 24698 / 74-OR23-1A / CBS 708.71 / DSM 1257 / FGSC 987)).